The primary structure comprises 231 residues: Protein OPG061 (231 aa).

It belongs to the orthopoxvirus OPG058 family.

Its subcellular location is the host nucleus. The protein resides in the host nucleolus. The sequence is that of Protein OPG061 (OPG061) from Vaccinia virus (strain Western Reserve) (VACV).